A 303-amino-acid polypeptide reads, in one-letter code: MNIAMTGGTGFLGQHLTGVLTRQGHHVYILSRNARETEQKNMTYVQWLSEGAAPEQELPHIDVWINLAGKSIFGRWTEKTKQHILSSRINATREVQRLIQKQKEKPKTLIQASAVGIYGTSLEKTFTEDSATSDEDFLSHTAHLWEKEGQHIEAMGIRTVYARFGVMLGEKGALPLMILPYKFLAGGTIGTGRQWLSWIHVEDAAQMIRYAVENAGISGPMNVTAPNPVDMKQFGKTIARVKHRPHWLPVPEFFLSKALGEMSLLIVKGQRALPKKAITSGFRFTYSDLEFALSQLIADRKTV.

It belongs to the NAD(P)-dependent epimerase/dehydratase family. SDR39U1 subfamily.

The protein is Epimerase family protein YfhF (yfhF) of Bacillus subtilis (strain 168).